The chain runs to 422 residues: Vitamin D3 receptor (422 aa).

Positions 21–96 form a DNA-binding region, nuclear receptor; it reads PRICGVCGDR…IGMMKEFILT (76 aa). Residues Cys-24, Cys-27, Cys-41, Cys-44, Cys-60, Cys-66, Cys-76, and Cys-79 each coordinate Zn(2+). 2 consecutive NR C4-type zinc fingers follow at residues 24–44 and 60–84; these read CGVC…CEGC and CPFN…LKRC. A hinge region spans residues 97-126; it reads DEEVQRKREMIMKRKEEEALKDSLRPKLSE. The 292-residue stretch at 127–418 folds into the NR LBD domain; sequence EQQHIIAILL…LTPLVLEVFG (292 aa). Tyr-143 lines the calcitriol pocket. The interval 161-185 is disordered; it reads VSTGSYSPRPTLSFSGDSSSNSDLY. A compositionally biased stretch (polar residues) spans 162–172; it reads STGSYSPRPTL. Residues 173 to 182 show a composition bias toward low complexity; sequence SFSGDSSSNS. A calcitriol-binding site is contributed by Ser-232. The interaction with coactivator LXXLL motif stretch occupies residues 241–259; that stretch reads KMIPGFRDLTSDDQIVLLK. 4 residues coordinate calcitriol: Arg-269, Ser-273, His-300, and His-392. The short motif at 411–419 is the 9aaTAD element; that stretch reads PLVLEVFGN.

This sequence belongs to the nuclear hormone receptor family. NR1 subfamily. As to quaternary structure, homodimer in the absence of bound vitamin D3. Heterodimer with RXRA after vitamin D3 binding. Interacts with MED1, NCOA1, NCOA2, NCOA3 and NCOA6 coactivators, leading to a strong increase of transcription of target genes. Interacts with the corepressor NCOR1. Interacts with SNW1. Interacts with IRX4, the interaction does not affect its transactivation activity. Interacts with CRY1. Interacts with CRY2 in a ligand-dependent manner. Post-translationally, ubiquitinated by UBR5, leading to its degradation: UBR5 specifically recognizes and binds ligand-bound VDR when it is not associated with coactivators (NCOAs). In presence of NCOAs, the UBR5-degron is not accessible, preventing its ubiquitination and degradation.

It localises to the nucleus. The protein resides in the cytoplasm. Its function is as follows. Nuclear receptor for calcitriol, the active form of vitamin D3 which mediates the action of this vitamin on cells. Enters the nucleus upon vitamin D3 binding where it forms heterodimers with the retinoid X receptor/RXR. The VDR-RXR heterodimers bind to specific response elements on DNA and activate the transcription of vitamin D3-responsive target genes. Plays a central role in calcium homeostasis. Also functions as a receptor for the secondary bile acid lithocholic acid (LCA) and its metabolites. This is Vitamin D3 receptor (Vdr) from Mus musculus (Mouse).